A 313-amino-acid chain; its full sequence is Putative olfactory receptor 2B3 (313 aa).

Topologically, residues 1 to 25 are extracellular; it reads MNWENESSPKEFILLGFSDRAWLQM. A glycan (N-linked (GlcNAc...) asparagine) is linked at N5. The chain crosses the membrane as a helical span at residues 26-49; the sequence is PLFVVLLISYTITIFGNVSIMMVC. Topologically, residues 50–57 are cytoplasmic; sequence ILDPKLHT. A helical transmembrane segment spans residues 58–79; sequence PMYFFLTNLSILDLCYTTTTVP. Topologically, residues 80-100 are extracellular; it reads HMLVNIGCNKKTISYAGCVAH. C97 and C189 are disulfide-bonded. A helical transmembrane segment spans residues 101-120; sequence LIIFLALGATECLLLAVMSF. The Cytoplasmic portion of the chain corresponds to 121-139; it reads DRYVAVCRPLHYVVIMNYW. Residues 140 to 158 form a helical membrane-spanning segment; sequence FCLRMAAFSWLIGFGNSVL. Residues 159–195 lie on the Extracellular side of the membrane; the sequence is QSSLTLNMPRCGHQEVDHFFCEVPALLKLSCADTKPI. Residues 196–219 form a helical membrane-spanning segment; sequence EAELFFFSVLILLIPVTLILISYG. Over 220 to 236 the chain is Cytoplasmic; the sequence is FIAQAVLKIRSAEGRQK. The helical transmembrane segment at 237-259 threads the bilayer; it reads AFGTCGSHMIVVSLFYGTAIYMY. Residues 260–272 are Extracellular-facing; it reads LQPPSSTSKDWGK. Residues 273 to 292 form a helical membrane-spanning segment; sequence MVSLFYGIITSMLNSLIYSL. Topologically, residues 293–313 are cytoplasmic; sequence RNKDMKEAFKRLMPRIFFCKK.

This sequence belongs to the G-protein coupled receptor 1 family.

It localises to the cell membrane. In terms of biological role, odorant receptor. The chain is Putative olfactory receptor 2B3 (OR2B3) from Homo sapiens (Human).